A 139-amino-acid chain; its full sequence is Cystatin (139 aa).

A signal peptide spans 1–23 (MAGARGCVVLLAAALMLVGAVLG). Residues 76-80 (QLVSG) carry the Secondary area of contact motif. Intrachain disulfides connect Cys94/Cys104 and Cys118/Cys138. Ser103 bears the Phosphoserine mark.

Belongs to the cystatin family.

The protein resides in the secreted. Functionally, this protein binds tightly to and inhibits a variety of thiol proteases including ficin, papain, and cathepsins B, C, H, and L. Although isolated from egg white, it is also present in serum. The chain is Cystatin from Gallus gallus (Chicken).